A 100-amino-acid polypeptide reads, in one-letter code: Small ribosomal subunit protein uS14c (100 aa).

Belongs to the universal ribosomal protein uS14 family. As to quaternary structure, part of the 30S ribosomal subunit.

It localises to the plastid. The protein resides in the chloroplast. Functionally, binds 16S rRNA, required for the assembly of 30S particles. The protein is Small ribosomal subunit protein uS14c of Porphyra purpurea (Red seaweed).